We begin with the raw amino-acid sequence, 233 residues long: Transcriptional regulatory protein WalR (233 aa).

One can recognise a Response regulatory domain in the interval 4–117 (KVVVVDDEKP…ELIARVKANL (114 aa)). 4-aspartylphosphate is present on Asp-53. The ompR/PhoB-type DNA-binding region spans 132-231 (TNEITIKDIV…RRGVGYFLQQ (100 aa)).

In terms of processing, phosphorylated by WalK.

The protein resides in the cytoplasm. In terms of biological role, member of the two-component regulatory system WalK/WalR. The protein is Transcriptional regulatory protein WalR (walR) of Staphylococcus haemolyticus (strain JCSC1435).